The following is a 298-amino-acid chain: 4-hydroxy-tetrahydrodipicolinate synthase (298 aa).

Thr-51 is a pyruvate binding site. Catalysis depends on Tyr-139, which acts as the Proton donor/acceptor. The Schiff-base intermediate with substrate role is filled by Lys-167. Ile-209 is a pyruvate binding site.

Belongs to the DapA family. In terms of assembly, homotetramer; dimer of dimers.

The protein resides in the cytoplasm. The catalysed reaction is L-aspartate 4-semialdehyde + pyruvate = (2S,4S)-4-hydroxy-2,3,4,5-tetrahydrodipicolinate + H2O + H(+). It participates in amino-acid biosynthesis; L-lysine biosynthesis via DAP pathway; (S)-tetrahydrodipicolinate from L-aspartate: step 3/4. Its function is as follows. Catalyzes the condensation of (S)-aspartate-beta-semialdehyde [(S)-ASA] and pyruvate to 4-hydroxy-tetrahydrodipicolinate (HTPA). The chain is 4-hydroxy-tetrahydrodipicolinate synthase from Haemophilus influenzae (strain PittGG).